We begin with the raw amino-acid sequence, 277 residues long: Myelin proteolipid protein (277 aa).

Residues 2 to 9 are Cytoplasmic-facing; the sequence is GLLECCAR. 3 S-palmitoyl cysteine lipidation sites follow: Cys6, Cys7, and Cys10. Residues 10-36 traverse the membrane as a helical segment; that stretch reads CLVGAPFASLVATGLCFFGVALFCGCG. Residues 37–63 lie on the Extracellular side of the membrane; the sequence is HEALTGTEKLIETYFSKNYQDYEYLIN. A helical transmembrane segment spans residues 64–88; that stretch reads VIHAFQYVIYGTASFFFLYGALLLA. Over 89–151 the chain is Cytoplasmic; sequence EGFYTTGAVR…LGKWLGHPDK (63 aa). Cys109 carries S-palmitoyl cysteine lipidation. Ser114 carries the phosphoserine modification. 2 positions are modified to phosphothreonine: Thr116 and Thr118. S-palmitoyl cysteine attachment occurs at residues Cys139 and Cys141. The chain crosses the membrane as a helical span at residues 152-177; it reads FVGITYALTVVWLLVFACSAVPVYIY. Residues 178–233 are Extracellular-facing; that stretch reads FNTWTTCQSIAFPSKTSASIGSLCADARMYGVLPWNAFPGKVCGSNLLSICKTAEF. 2 disulfide bridges follow: Cys184/Cys228 and Cys201/Cys220. The O-palmitoyl serine moiety is linked to residue Ser199. The chain crosses the membrane as a helical span at residues 234-260; the sequence is QMTFHLFIAAFVGAAATLVSLLTFMIA. Residues 261–277 lie on the Cytoplasmic side of the membrane; the sequence is ATYNFAVLKLMGRGTKF.

The protein belongs to the myelin proteolipid protein family. As to quaternary structure, interacts with MAL.

The protein localises to the cell membrane. It localises to the myelin membrane. In terms of biological role, this is the major myelin protein from the central nervous system. It plays an important role in the formation or maintenance of the multilamellar structure of myelin. This chain is Myelin proteolipid protein (Plp1), found in Mus musculus (Mouse).